Consider the following 287-residue polypeptide: 2-dehydro-3-deoxyphosphooctonate aldolase (287 aa).

It belongs to the KdsA family.

The protein localises to the cytoplasm. The catalysed reaction is D-arabinose 5-phosphate + phosphoenolpyruvate + H2O = 3-deoxy-alpha-D-manno-2-octulosonate-8-phosphate + phosphate. It participates in carbohydrate biosynthesis; 3-deoxy-D-manno-octulosonate biosynthesis; 3-deoxy-D-manno-octulosonate from D-ribulose 5-phosphate: step 2/3. Its pathway is bacterial outer membrane biogenesis; lipopolysaccharide biosynthesis. This Rhodopseudomonas palustris (strain ATCC BAA-98 / CGA009) protein is 2-dehydro-3-deoxyphosphooctonate aldolase.